The chain runs to 96 residues: Protein RnfH (96 aa).

The protein belongs to the UPF0125 (RnfH) family.

The sequence is that of Protein RnfH from Hahella chejuensis (strain KCTC 2396).